The sequence spans 57 residues: Light-harvesting protein B-808/866 alpha chain (57 aa).

Met-1 carries the N-formylmethionine modification. Residues 1 to 10 (MQPRSPVRTN) lie on the Cytoplasmic side of the membrane. A helical membrane pass occupies residues 11 to 30 (IVIFTILGFVVALLIHFIVL). His-26 provides a ligand contact to a bacteriochlorophyll. Residues 31–57 (SSPEYNWLSNAEGGALLLSAARALFGI) lie on the Periplasmic side of the membrane.

It belongs to the antenna complex alpha subunit family. The core complex is formed by different alpha and beta chains, binding bacteriochlorophyll molecules, and arranged most probably in tetrameric structures disposed around the reaction center. The non-pigmented gamma chains may constitute additional components.

It is found in the cell membrane. Antenna complexes are light-harvesting systems, which transfer the excitation energy to the reaction centers. In Chloroflexus aurantiacus (strain ATCC 29366 / DSM 635 / J-10-fl), this protein is Light-harvesting protein B-808/866 alpha chain (puf2A).